The sequence spans 355 residues: MNLQYSPVFKCPPEMVTHCQWIYWFTHFELLAMIIEIPSFLLVIYATIKSPFHYNLNFIGLFMLLGYYVFLVGRFITCLYEIGSLTVKDEDAENEIYPMPLILSSILQFFYMGCACGISLAVAFERFFATYFVETYEKKKRKWISLFLCSEFTVACGVSAIVMLYDLLPFAVMAFLGVFISCASFLFYLVLFYMNKRRLHTIQQDRDNDVYTLSVRFQLSENLKVMTLLRNVVLFSGVNNFVMAIILTMYMSKSFKVSYPLATLYLHFAFNCCVLLYSFLMLIIIIFSVKQYRMYYFSIRFVRVVLYPLVGRCFQNEFSQSPVQQLTIRDETESYFVNLSSQWDEKFQKINRLSI.

Helical transmembrane passes span 28–48 (FELL…YATI), 56–76 (LNFI…GRFI), 102–122 (ILSS…SLAV), 144–164 (ISLF…IVML), 172–192 (VMAF…LVLF), 232–252 (VVLF…MYMS), and 268–288 (FAFN…IIFS).

The protein belongs to the nematode receptor-like protein sre family.

Its subcellular location is the membrane. The polypeptide is Serpentine receptor class epsilon-1 (sre-1) (Caenorhabditis elegans).